Here is a 75-residue protein sequence, read N- to C-terminus: MEKEFNFEEDLKRLEEIVDTLEKGNLMLEESFNLFKEGVEISKRLEKMLKEVEGKITMLISEDEEIEFKEEENNV.

This sequence belongs to the XseB family. Heterooligomer composed of large and small subunits.

The protein localises to the cytoplasm. The enzyme catalyses Exonucleolytic cleavage in either 5'- to 3'- or 3'- to 5'-direction to yield nucleoside 5'-phosphates.. Its function is as follows. Bidirectionally degrades single-stranded DNA into large acid-insoluble oligonucleotides, which are then degraded further into small acid-soluble oligonucleotides. The chain is Exodeoxyribonuclease 7 small subunit from Caldanaerobacter subterraneus subsp. tengcongensis (strain DSM 15242 / JCM 11007 / NBRC 100824 / MB4) (Thermoanaerobacter tengcongensis).